The sequence spans 98 residues: uncharacterized protein (98 aa).

The segment covering methionine 1–arginine 10 has biased composition (basic residues). A disordered region spans residues methionine 1–arginine 21.

This is an uncharacterized protein from Mycobacterium bovis (strain ATCC BAA-935 / AF2122/97).